We begin with the raw amino-acid sequence, 343 residues long: Phenylalanine--tRNA ligase alpha subunit (343 aa).

E268 lines the Mg(2+) pocket.

This sequence belongs to the class-II aminoacyl-tRNA synthetase family. Phe-tRNA synthetase alpha subunit type 1 subfamily. In terms of assembly, tetramer of two alpha and two beta subunits. It depends on Mg(2+) as a cofactor.

The protein resides in the cytoplasm. The catalysed reaction is tRNA(Phe) + L-phenylalanine + ATP = L-phenylalanyl-tRNA(Phe) + AMP + diphosphate + H(+). This Cupriavidus taiwanensis (strain DSM 17343 / BCRC 17206 / CCUG 44338 / CIP 107171 / LMG 19424 / R1) (Ralstonia taiwanensis (strain LMG 19424)) protein is Phenylalanine--tRNA ligase alpha subunit.